Reading from the N-terminus, the 882-residue chain is Valine--tRNA ligase (882 aa).

The 'HIGH' region signature appears at 48 to 58; the sequence is PNVTGKLHLGH. Positions 524-528 match the 'KMSKS' region motif; that stretch reads KMSKS. Lys-527 serves as a coordination point for ATP. Residues 809–882 are a coiled coil; the sequence is LAELLDLDEE…KRLAELKAAR (74 aa). The segment at 844–866 is disordered; the sequence is GFTDRAPEKVVQEERDKQADYEQ. Residues 845 to 863 show a composition bias toward basic and acidic residues; that stretch reads FTDRAPEKVVQEERDKQAD.

This sequence belongs to the class-I aminoacyl-tRNA synthetase family. ValS type 1 subfamily. As to quaternary structure, monomer.

The protein localises to the cytoplasm. It carries out the reaction tRNA(Val) + L-valine + ATP = L-valyl-tRNA(Val) + AMP + diphosphate. Functionally, catalyzes the attachment of valine to tRNA(Val). As ValRS can inadvertently accommodate and process structurally similar amino acids such as threonine, to avoid such errors, it has a 'posttransfer' editing activity that hydrolyzes mischarged Thr-tRNA(Val) in a tRNA-dependent manner. This is Valine--tRNA ligase from Latilactobacillus sakei subsp. sakei (strain 23K) (Lactobacillus sakei subsp. sakei).